An 858-amino-acid polypeptide reads, in one-letter code: Chitin synthase 2 (858 aa).

Over residues 1–12 the composition is skewed to basic and acidic residues; it reads MYPEGPKPEHDQ. The disordered stretch occupies residues 1–116; that stretch reads MYPEGPKPEH…GQAPRRQPRR (116 aa). Residues 15 to 24 show a composition bias toward polar residues; sequence LQDTQFSNQP. 2 stretches are compositionally biased toward pro residues: residues 52–68 and 76–89; these read AYPP…PNFP and PYPP…PVSP. Transmembrane regions (helical) follow at residues 500–517, 540–560, 586–606, 621–641, 665–685, 799–819, and 825–845; these read RWLN…YHWR, TYNL…FFIL, LHTV…IMAL, MVFF…ITVV, NIII…FMFL, VLAW…TTVI, and ASIY…IRFT.

Belongs to the chitin synthase family.

The protein localises to the cell membrane. It catalyses the reaction [(1-&gt;4)-N-acetyl-beta-D-glucosaminyl](n) + UDP-N-acetyl-alpha-D-glucosamine = [(1-&gt;4)-N-acetyl-beta-D-glucosaminyl](n+1) + UDP + H(+). Its function is as follows. Polymerizes chitin, a structural polymer of the cell wall and septum, by transferring the sugar moiety of UDP-GlcNAc to the non-reducing end of the growing chitin polymer. This is Chitin synthase 2 (CHS2) from Rhizopus oligosporus (Rhizopus microsporus var. oligosporus).